The following is a 381-amino-acid chain: Succinyl-diaminopimelate desuccinylase (381 aa).

Residue His-68 participates in Zn(2+) binding. Asp-70 is a catalytic residue. Asp-101 contributes to the Zn(2+) binding site. The active-site Proton acceptor is Glu-135. 3 residues coordinate Zn(2+): Glu-136, Glu-164, and His-350.

It belongs to the peptidase M20A family. DapE subfamily. Homodimer. The cofactor is Zn(2+). Co(2+) is required as a cofactor.

It carries out the reaction N-succinyl-(2S,6S)-2,6-diaminopimelate + H2O = (2S,6S)-2,6-diaminopimelate + succinate. It functions in the pathway amino-acid biosynthesis; L-lysine biosynthesis via DAP pathway; LL-2,6-diaminopimelate from (S)-tetrahydrodipicolinate (succinylase route): step 3/3. Catalyzes the hydrolysis of N-succinyl-L,L-diaminopimelic acid (SDAP), forming succinate and LL-2,6-diaminopimelate (DAP), an intermediate involved in the bacterial biosynthesis of lysine and meso-diaminopimelic acid, an essential component of bacterial cell walls. The polypeptide is Succinyl-diaminopimelate desuccinylase (dapE) (Neisseria meningitidis serogroup B (strain ATCC BAA-335 / MC58)).